Reading from the N-terminus, the 429-residue chain is Phenylalanine--tRNA ligase, chloroplastic/mitochondrial (429 aa).

The transit peptide at 1–53 (MTVFSVQSTIFSRASVALLSSNGFKRFSFVSSFSSSAAYSPPKMRKRRYPIVS) directs the protein to the chloroplast and mitochondrion. The residue at position 54 (A54) is an N-acetylalanine. Substrate contacts are provided by residues 163-166 (SAHQ), R185, 192-194 (THY), 199-201 (QME), E269, and F294. The region spanning 338 to 429 (SKYPPCYKDI…VQKKLNVELR (92 aa)) is the FDX-ACB domain.

This sequence belongs to the class-II aminoacyl-tRNA synthetase family. In terms of assembly, monomer.

It localises to the plastid. It is found in the chloroplast stroma. The protein localises to the mitochondrion matrix. The catalysed reaction is tRNA(Phe) + L-phenylalanine + ATP = L-phenylalanyl-tRNA(Phe) + AMP + diphosphate + H(+). Is responsible for the charging of tRNA(Phe) with phenylalanine in mitochondrial translation. The polypeptide is Phenylalanine--tRNA ligase, chloroplastic/mitochondrial (Arabidopsis thaliana (Mouse-ear cress)).